A 706-amino-acid polypeptide reads, in one-letter code: Probable cyclic nucleotide-gated ion channel 3 (706 aa).

At 1–85 (MMNPQRNKFV…NDSYLQSWNK (85 aa)) the chain is on the cytoplasmic side. A helical membrane pass occupies residues 86 to 106 (IFLLLSVVALAFDPLFFYIPY). At 107–119 (VKPERFCLNLDKK) the chain is on the extracellular side. The helical transmembrane segment at 120 to 140 (LQTIACVFRTFIDAFYVVHML) threads the bilayer. The Cytoplasmic segment spans residues 141-174 (FQFHTGFITPSSSGFGRGELNEKHKDIALRYLGS). Residues 175–195 (YFLIDLLSILPIPQVVVLAIV) traverse the membrane as a helical segment. Residues 196–208 (PRMRRPASLVAKE) are Extracellular-facing. A helical transmembrane segment spans residues 209–229 (LLKWVIFCQYVPRIARIYPLF). Topologically, residues 230–247 (KEVTRTSGLVTETAWAGA) are cytoplasmic. A helical membrane pass occupies residues 248-268 (ALNLFLYMLASHVFGSFWYLI). Over 269–371 (SIERKDRCWR…QNLKTSAFEG (103 aa)) the chain is Extracellular. Residues 372–392 (EIIFAIVICISGLVLFALLIG) form a helical membrane-spanning segment. Topologically, residues 393 to 706 (NMQKYLQSTT…ADPEFPMDET (314 aa)) are cytoplasmic. A nucleoside 3',5'-cyclic phosphate is bound by residues 477-600 (WFQA…KQLR) and Asp-548. Residues 591-606 (YRRLHSKQLRHMFRFY) form a calmodulin-binding region. Residues 611–640 (QTWAACFIQAAWKRHCRRKLSKALREEEGK) form the IQ domain.

This sequence belongs to the cyclic nucleotide-gated cation channel (TC 1.A.1.5) family. As to quaternary structure, homotetramer or heterotetramer.

Its subcellular location is the cell membrane. Functionally, probable cyclic nucleotide-gated ion channel. The protein is Probable cyclic nucleotide-gated ion channel 3 (CNGC3) of Arabidopsis thaliana (Mouse-ear cress).